The primary structure comprises 95 residues: EFTISFSSPVISTGQHIDVGDEDYHDGDDDVDYTDDVDDVDDSHGSPSQLLQGGYQRNQHYGGGNYQSGYYRPNKQHGNGYGGQYPKKYGSGHKY.

The span at 1 to 15 (EFTISFSSPVISTGQ) shows a compositional bias: polar residues. The tract at residues 1-95 (EFTISFSSPV…PKKYGSGHKY (95 aa)) is disordered. The segment covering 20–41 (GDEDYHDGDDDVDYTDDVDDVD) has biased composition (acidic residues). The span at 45 to 59 (GSPSQLLQGGYQRNQ) shows a compositional bias: polar residues.

The protein belongs to the immunogenic miracidial antigen family.

This is Immunogenic miracidial antigen 8C (8C) from Schistosoma japonicum (Blood fluke).